The chain runs to 554 residues: uncharacterized protein (554 aa).

Residues aspartate 327 and asparagine 328 each contribute to the Ca(2+) site.

The protein belongs to the sulfatase family. Ca(2+) is required as a cofactor.

It localises to the cytoplasm. The protein localises to the nucleus. This is an uncharacterized protein from Schizosaccharomyces pombe (strain 972 / ATCC 24843) (Fission yeast).